Here is a 451-residue protein sequence, read N- to C-terminus: Bifunctional protein GlmU (451 aa).

Residues 1 to 231 (MDSPLAIIVL…ADEVAGINSR (231 aa)) form a pyrophosphorylase region. UDP-N-acetyl-alpha-D-glucosamine contacts are provided by residues 10–13 (LAAG), K24, Q74, 79–80 (GT), 102–104 (YGD), G142, E156, N171, and N229. D104 contacts Mg(2+). N229 contributes to the Mg(2+) binding site. A linker region spans residues 232-252 (GELAEAEGRWQQRRRAAAMAD). Residues 253–451 (GASLIAPETV…MKKKKAEKKS (199 aa)) form an N-acetyltransferase region. UDP-N-acetyl-alpha-D-glucosamine contacts are provided by R318 and K336. The Proton acceptor role is filled by H348. Residues Y351 and N362 each contribute to the UDP-N-acetyl-alpha-D-glucosamine site. Acetyl-CoA contacts are provided by residues A365, 371 to 372 (NY), S390, A408, and R425.

This sequence in the N-terminal section; belongs to the N-acetylglucosamine-1-phosphate uridyltransferase family. In the C-terminal section; belongs to the transferase hexapeptide repeat family. Homotrimer. The cofactor is Mg(2+).

The protein localises to the cytoplasm. It carries out the reaction alpha-D-glucosamine 1-phosphate + acetyl-CoA = N-acetyl-alpha-D-glucosamine 1-phosphate + CoA + H(+). The enzyme catalyses N-acetyl-alpha-D-glucosamine 1-phosphate + UTP + H(+) = UDP-N-acetyl-alpha-D-glucosamine + diphosphate. Its pathway is nucleotide-sugar biosynthesis; UDP-N-acetyl-alpha-D-glucosamine biosynthesis; N-acetyl-alpha-D-glucosamine 1-phosphate from alpha-D-glucosamine 6-phosphate (route II): step 2/2. It functions in the pathway nucleotide-sugar biosynthesis; UDP-N-acetyl-alpha-D-glucosamine biosynthesis; UDP-N-acetyl-alpha-D-glucosamine from N-acetyl-alpha-D-glucosamine 1-phosphate: step 1/1. It participates in bacterial outer membrane biogenesis; LPS lipid A biosynthesis. In terms of biological role, catalyzes the last two sequential reactions in the de novo biosynthetic pathway for UDP-N-acetylglucosamine (UDP-GlcNAc). The C-terminal domain catalyzes the transfer of acetyl group from acetyl coenzyme A to glucosamine-1-phosphate (GlcN-1-P) to produce N-acetylglucosamine-1-phosphate (GlcNAc-1-P), which is converted into UDP-GlcNAc by the transfer of uridine 5-monophosphate (from uridine 5-triphosphate), a reaction catalyzed by the N-terminal domain. The protein is Bifunctional protein GlmU of Novosphingobium aromaticivorans (strain ATCC 700278 / DSM 12444 / CCUG 56034 / CIP 105152 / NBRC 16084 / F199).